A 36-amino-acid chain; its full sequence is Photosystem I reaction center subunit VIII (36 aa).

The chain crosses the membrane as a helical span at residues 9–29; sequence ILTPVVTLVFPGLMFALFFVL.

The protein belongs to the PsaI family.

It is found in the plastid. It localises to the chloroplast thylakoid membrane. May help in the organization of the PsaL subunit. The protein is Photosystem I reaction center subunit VIII of Emiliania huxleyi (Coccolithophore).